The primary structure comprises 764 residues: Complement factor B (764 aa).

Residues 1–25 (MGSNLSPQLCLMPFILGLLSGGVTT) form the signal peptide. 3 Sushi domains span residues 35–100 (ESCS…ECRA), 101–160 (IHCP…ICDN), and 163–220 (GYCS…SCQD). Intrachain disulfides connect Cys37–Cys76, Cys62–Cys98, Cys103–Cys145, Cys131–Cys158, Cys165–Cys205, and Cys191–Cys218. N-linked (GlcNAc...) asparagine glycosylation is found at Asn122 and Asn142. Residues 270–469 (NIYLVLDGSD…NLEDVFYQMI (200 aa)) enclose the VWFA domain. Positions 278 and 280 each coordinate Mg(2+). A glycan (N-linked (GlcNAc...) asparagine) is linked at Asn285. Position 353 (Thr353) interacts with Mg(2+). A glycan (N-linked (GlcNAc...) asparagine) is linked at Asn378. In terms of domain architecture, Peptidase S1 spans 477-757 (LCGMVWEHRK…VLPWLKEKLQ (281 aa)). Intrachain disulfides connect Cys478-Cys596, Cys511-Cys527, Cys599-Cys615, Cys656-Cys682, and Cys695-Cys725. Catalysis depends on charge relay system residues His526 and Asp576. The active-site Charge relay system is Ser699.

The protein belongs to the peptidase S1 family. In terms of assembly, monomer. Interacts with complement C3b; this interaction is dependent on the presence of Mg(2+). As to quaternary structure, catalytic component of the C3 convertase of the alternative complement pathway, also named C3bBb, composed of complement factor B Bb and complement C3b. Catalytic component of the C5 convertase of the alternative complement pathway, also named C3bBb3b, composed of complement factor B Bb and additional molecules of complement C3b. Interacts to CFP; this interaction contributes to the stabilization of the active C3-convertase enzyme complex. It depends on Mg(2+) as a cofactor. The cofactor is Mn(2+). Cleaved by CFD following activation of the alternative complement system, generating Ba and Bb chains. Cleavage and activation takes place when CFB is already associated with complement C3b.

The protein resides in the secreted. It is found in the cell surface. It catalyses the reaction Cleavage of Arg-|-Ser bond in complement component C3 alpha-chain to yield C3a and C3b, and Arg-|-Xaa bond in complement component C5 alpha-chain to yield C5a and C5b.. In terms of biological role, precursor of the catalytic component of the C3 and C5 convertase complexes of the alternative pathway of the complement system, a cascade of proteins that leads to phagocytosis and breakdown of pathogens and signaling that strengthens the adaptive immune system. The alternative complement pathway acts as an amplification loop that enhances other complement pathways (classical, lectin and GZMK) by promoting formation of additional C3 and C5 convertases. CFB is cleaved and activated by CFD to generate Ba and Bb chains; Bb chain constituting the catalytic component of the C3 and C5 convertases. Its function is as follows. Serine protease component of the complement C3 and C5 convertase complexes of the alternative complement pathway. Following cleavage and activation by factor D (CFD), forms the C3 convertase together with complement C3b. As part of the C3 convertase, cleaves and activates C3 into C3a anaphylatoxin and C3b opsonin, the next components of the complement pathways. When an additional complement C3b molecule binds to the C3 convertase, forms the C5 convertase, which cleaves and activates C5 into C5a anaphylatoxin and C5b component of the membrane attack complex. Functionally, involved in proliferation and differentiation of preactivated B-lymphocytes, rapid spreading of peripheral blood monocytes, stimulation of lymphocyte blastogenesis and lysis of erythrocytes. This chain is Complement factor B (CFB), found in Pan troglodytes (Chimpanzee).